Consider the following 396-residue polypeptide: Adenosine deaminase 1 (396 aa).

Residues 1–26 (MTSRSTEKSAAANPAAVSKTPSPDRI) form a disordered region. Zn(2+) contacts are provided by histidine 35 and histidine 37. Substrate contacts are provided by histidine 37, aspartate 39, and glycine 197. Histidine 224 is a Zn(2+) binding site. The active-site Proton donor is the glutamate 227. Residue aspartate 316 participates in Zn(2+) binding.

This sequence belongs to the metallo-dependent hydrolases superfamily. Adenosine and AMP deaminases family. Adenosine deaminase subfamily. In terms of assembly, homotetramer. Zn(2+) is required as a cofactor.

It carries out the reaction adenosine + H2O + H(+) = inosine + NH4(+). The catalysed reaction is 2'-deoxyadenosine + H2O + H(+) = 2'-deoxyinosine + NH4(+). Coformycin and 2'-deoxycoformycin, whose structures mimic the transition state of the deamination reaction, are potent competitive inhibitors. Its function is as follows. Catalyzes the hydrolytic deamination of adenosine and 2-deoxyadenosine. The polypeptide is Adenosine deaminase 1 (Streptomyces coelicolor (strain ATCC BAA-471 / A3(2) / M145)).